A 229-amino-acid polypeptide reads, in one-letter code: Large ribosomal subunit protein uL1 (229 aa).

This sequence belongs to the universal ribosomal protein uL1 family. In terms of assembly, part of the 50S ribosomal subunit.

Functionally, binds directly to 23S rRNA. The L1 stalk is quite mobile in the ribosome, and is involved in E site tRNA release. Its function is as follows. Protein L1 is also a translational repressor protein, it controls the translation of the L11 operon by binding to its mRNA. This is Large ribosomal subunit protein uL1 from Streptococcus pneumoniae (strain ATCC 700669 / Spain 23F-1).